We begin with the raw amino-acid sequence, 199 residues long: Pneumococcal vaccine antigen A homolog (199 aa).

Its subcellular location is the cell surface. The polypeptide is Pneumococcal vaccine antigen A homolog (pvaA) (Streptococcus pyogenes serotype M1).